A 1268-amino-acid polypeptide reads, in one-letter code: Truncated polyprotein 1aTF (1268 aa).

Residues 8 to 28 (CMCTPAARVFWNAGQVFCTRC) form a C4-type; atypical zinc finger. Residues 69 to 180 (ECTPSGCCWL…QPFCPFEEAH (112 aa)) form the Peptidase C31 domain. Residues 69–182 (ECTPSGCCWL…FCPFEEAHSD (114 aa)) are PCP1-alpha. Active-site for Nsp1-alpha papain-like cysteine proteinase activity residues include Cys-76 and His-146. A PCP1-beta region spans residues 269-384 (PNVFDGKCWL…IFRFGAHKWY (116 aa)). Residues 269–385 (PNVFDGKCWL…FRFGAHKWYG (117 aa)) form the Peptidase C32 domain. Catalysis depends on for Nsp1-beta papain-like cysteine proteinase activity residues Cys-276 and His-345. Residues 420 to 527 (TYSPPTDGSC…VGVCSEGCVA (108 aa)) form the Peptidase C33 domain. Catalysis depends on for Nsp2 cysteine proteinase activity residues Cys-429 and His-498. Disordered regions lie at residues 728 to 758 (AIGS…SHPA) and 1027 to 1064 (SVTP…SHAS). Residues 737–749 (DSKRENMHNSRED) show a composition bias toward basic and acidic residues. The next 4 helical transmembrane spans lie at 1119–1139 (LWLQ…CSVV), 1153–1173 (FLVL…LLLY), 1194–1214 (VMLS…AALW), and 1233–1253 (VISG…FLLF).

It is found in the host nucleus. The protein localises to the host cytoplasm. The protein resides in the host endoplasmic reticulum membrane. Its subcellular location is the membrane. Its function is as follows. Is essential for viral subgenomic mRNA synthesis. In terms of biological role, inhibits IFN-beta production. Counteracts the action of NF-kappaB by decreasing the phosphorylation of IkappaB-alpha, such that the degradation of IkappaB-alpha is suppressed. This leads to the blockage of NF-kappaB nuclear translocation and thus interference of NF-kappaB activation. Also seems to inhibit IRF3-dependent pathways. Nsp1-beta transactivates the programmed ribosomal frameshifting event leading to the expression of the 1aTF polyprotein. This is Truncated polyprotein 1aTF from Porcine reproductive and respiratory syndrome virus (isolate Pig/United States/SD 01-08/2001) (PRRSV).